Reading from the N-terminus, the 235-residue chain is 2-C-methyl-D-erythritol 4-phosphate cytidylyltransferase (235 aa).

The protein belongs to the IspD/TarI cytidylyltransferase family. IspD subfamily.

It carries out the reaction 2-C-methyl-D-erythritol 4-phosphate + CTP + H(+) = 4-CDP-2-C-methyl-D-erythritol + diphosphate. It participates in isoprenoid biosynthesis; isopentenyl diphosphate biosynthesis via DXP pathway; isopentenyl diphosphate from 1-deoxy-D-xylulose 5-phosphate: step 2/6. Catalyzes the formation of 4-diphosphocytidyl-2-C-methyl-D-erythritol from CTP and 2-C-methyl-D-erythritol 4-phosphate (MEP). The chain is 2-C-methyl-D-erythritol 4-phosphate cytidylyltransferase from Ectopseudomonas mendocina (strain ymp) (Pseudomonas mendocina).